We begin with the raw amino-acid sequence, 127 residues long: Tyrosine-protein phosphatase 2 (127 aa).

The Tyrosine-protein phosphatase domain maps to Q1 to V127. Positions V63 to P81 are enriched in acidic residues. The disordered stretch occupies residues V63–E82.

This sequence belongs to the protein-tyrosine phosphatase family.

It catalyses the reaction O-phospho-L-tyrosyl-[protein] + H2O = L-tyrosyl-[protein] + phosphate. This Styela plicata (Wrinkled sea squirt) protein is Tyrosine-protein phosphatase 2 (STY-2).